Reading from the N-terminus, the 146-residue chain is Small RNA-binding protein 11, chloroplastic (146 aa).

A chloroplast-targeting transit peptide spans 1–31; the sequence is MAALARIGGRHLKSVCLINSSASCFFTQRRG. Residues 34–112 enclose the RRM domain; the sequence is SKLFIGGLSF…RTIFVDYAKA (79 aa). Serine 42 carries the phosphoserine modification.

Expressed in rosette leaves, cauline leaves, stems and flowers.

The protein localises to the plastid. The protein resides in the chloroplast. In terms of biological role, probable RNA-binding protein that may be involved in salt and oxidative stress tolerance. The protein is Small RNA-binding protein 11, chloroplastic of Arabidopsis thaliana (Mouse-ear cress).